A 155-amino-acid polypeptide reads, in one-letter code: Deoxyuridine 5'-triphosphate nucleotidohydrolase (155 aa).

Residues 71–73 (RSG), asparagine 84, 88–90 (TID), and lysine 98 contribute to the substrate site.

It belongs to the dUTPase family. Requires Mg(2+) as cofactor.

It catalyses the reaction dUTP + H2O = dUMP + diphosphate + H(+). The protein operates within pyrimidine metabolism; dUMP biosynthesis; dUMP from dCTP (dUTP route): step 2/2. In terms of biological role, this enzyme is involved in nucleotide metabolism: it produces dUMP, the immediate precursor of thymidine nucleotides and it decreases the intracellular concentration of dUTP so that uracil cannot be incorporated into DNA. This is Deoxyuridine 5'-triphosphate nucleotidohydrolase from Corynebacterium jeikeium (strain K411).